We begin with the raw amino-acid sequence, 311 residues long: tRNA dimethylallyltransferase (311 aa).

9-16 contacts ATP; the sequence is GPTAVGKT. A substrate-binding site is contributed by 11–16; it reads TAVGKT. Positions 34-37 are interaction with substrate tRNA; that stretch reads DSMQ.

This sequence belongs to the IPP transferase family. Monomer. The cofactor is Mg(2+).

The catalysed reaction is adenosine(37) in tRNA + dimethylallyl diphosphate = N(6)-dimethylallyladenosine(37) in tRNA + diphosphate. In terms of biological role, catalyzes the transfer of a dimethylallyl group onto the adenine at position 37 in tRNAs that read codons beginning with uridine, leading to the formation of N6-(dimethylallyl)adenosine (i(6)A). In Clostridium botulinum (strain Loch Maree / Type A3), this protein is tRNA dimethylallyltransferase.